The sequence spans 64 residues: uncharacterized protein (64 aa).

The next 2 membrane-spanning stretches (helical) occupy residues 4–24 and 35–55; these read IYQY…WLAY and MYLN…TFGM.

It localises to the cell membrane. This is an uncharacterized protein from Bacillus subtilis (strain 168).